The primary structure comprises 247 residues: Probable transcriptional regulatory protein TDE_1487 (247 aa).

It belongs to the TACO1 family.

It localises to the cytoplasm. This is Probable transcriptional regulatory protein TDE_1487 from Treponema denticola (strain ATCC 35405 / DSM 14222 / CIP 103919 / JCM 8153 / KCTC 15104).